A 392-amino-acid polypeptide reads, in one-letter code: Phospho-N-acetylmuramoyl-pentapeptide-transferase (392 aa).

10 helical membrane-spanning segments follow: residues 28-48, 76-96, 101-121, 137-157, 181-201, 213-233, 268-288, 295-315, 320-340, and 369-389; these read IIAAGVFALLLGMLIGPKLIA, TMGGALILLCIAAGTLLFADL, VWVMLLLTLGYGFIGFLDDWL, MVLQTFFFLVAVFGLLTTWTL, WFNPDLGWFYVFFAWIVVVGT, GLAIVPTIVSAITFAVLCYVA, GAELAVFCAAIVGAGISFLWF, VFMGDIGSLALGGALGGLAML, VVSAIIHGIFFAEILSVMIQV, and KIIVRFWIVSILCGGVALLSL.

This sequence belongs to the glycosyltransferase 4 family. MraY subfamily. Mg(2+) serves as cofactor.

Its subcellular location is the cell inner membrane. It catalyses the reaction UDP-N-acetyl-alpha-D-muramoyl-L-alanyl-gamma-D-glutamyl-meso-2,6-diaminopimeloyl-D-alanyl-D-alanine + di-trans,octa-cis-undecaprenyl phosphate = di-trans,octa-cis-undecaprenyl diphospho-N-acetyl-alpha-D-muramoyl-L-alanyl-D-glutamyl-meso-2,6-diaminopimeloyl-D-alanyl-D-alanine + UMP. The protein operates within cell wall biogenesis; peptidoglycan biosynthesis. Functionally, catalyzes the initial step of the lipid cycle reactions in the biosynthesis of the cell wall peptidoglycan: transfers peptidoglycan precursor phospho-MurNAc-pentapeptide from UDP-MurNAc-pentapeptide onto the lipid carrier undecaprenyl phosphate, yielding undecaprenyl-pyrophosphoryl-MurNAc-pentapeptide, known as lipid I. The chain is Phospho-N-acetylmuramoyl-pentapeptide-transferase from Myxococcus xanthus (strain DK1622).